A 221-amino-acid chain; its full sequence is UPF0328 protein ECU11_2110 (221 aa).

This sequence belongs to the UPF0328 family.

This chain is UPF0328 protein ECU11_2110, found in Encephalitozoon cuniculi (strain GB-M1) (Microsporidian parasite).